A 423-amino-acid chain; its full sequence is Mannose-6-phosphate isomerase (423 aa).

Position 2 is an N-acetylalanine (alanine 2). Serine 102 and serine 108 each carry phosphoserine. Zn(2+) contacts are provided by glutamine 110, histidine 112, glutamate 137, and histidine 276. Residue arginine 295 is part of the active site.

The protein belongs to the mannose-6-phosphate isomerase type 1 family. Requires Zn(2+) as cofactor.

The protein localises to the cytoplasm. It catalyses the reaction D-mannose 6-phosphate = D-fructose 6-phosphate. It functions in the pathway nucleotide-sugar biosynthesis; GDP-alpha-D-mannose biosynthesis; alpha-D-mannose 1-phosphate from D-fructose 6-phosphate: step 1/2. Isomerase that catalyzes the interconversion of fructose-6-P and mannose-6-P and has a critical role in the supply of D-mannose derivatives required for many eukaryotic glycosylation reactions. The chain is Mannose-6-phosphate isomerase (MPI) from Bos taurus (Bovine).